An 807-amino-acid polypeptide reads, in one-letter code: DNA gyrase subunit B (807 aa).

In terms of domain architecture, Toprim spans 429 to 543; it reads SELFIVEGDS…KGYLYIAQPP (115 aa). Mg(2+)-binding residues include E435, D508, and D510.

The protein belongs to the type II topoisomerase GyrB family. As to quaternary structure, heterotetramer, composed of two GyrA and two GyrB chains. In the heterotetramer, GyrA contains the active site tyrosine that forms a transient covalent intermediate with DNA, while GyrB binds cofactors and catalyzes ATP hydrolysis. The cofactor is Mg(2+). It depends on Mn(2+) as a cofactor. Requires Ca(2+) as cofactor.

The protein resides in the cytoplasm. It carries out the reaction ATP-dependent breakage, passage and rejoining of double-stranded DNA.. Its function is as follows. A type II topoisomerase that negatively supercoils closed circular double-stranded (ds) DNA in an ATP-dependent manner to modulate DNA topology and maintain chromosomes in an underwound state. Negative supercoiling favors strand separation, and DNA replication, transcription, recombination and repair, all of which involve strand separation. Also able to catalyze the interconversion of other topological isomers of dsDNA rings, including catenanes and knotted rings. Type II topoisomerases break and join 2 DNA strands simultaneously in an ATP-dependent manner. The protein is DNA gyrase subunit B of Rickettsia conorii (strain ATCC VR-613 / Malish 7).